Reading from the N-terminus, the 679-residue chain is Patatin-like phospholipase 1 (679 aa).

Disordered regions lie at residues 19–45 and 155–194; these read FSDDEKDDSYEREKQVYSGSETQNAEN and GEYEKRNTSSYDNTESVQNTVGSEKEETENKNEETSNYNS. 2 stretches are compositionally biased toward polar residues: residues 35-45 and 162-176; these read YSGSETQNAEN and TSSYDNTESVQNTVG. The span at 177-188 shows a compositional bias: basic and acidic residues; that stretch reads SEKEETENKNEE. One can recognise a PNPLA domain in the interval 338–544; it reads LSLDGGGILT…KASNPALIAL (207 aa). A GXSXG motif is present at residues 381-385; that stretch reads GTSAG. Ser383 serves as the catalytic Nucleophile. Residue Asp531 is the Proton acceptor of the active site. The DGA/G motif lies at 531-533; sequence DGA.

The protein belongs to the patatin family.

The protein localises to the cytoplasm. The catalysed reaction is a 1,2-diacyl-sn-glycero-3-phosphocholine + H2O = a 1-acyl-sn-glycero-3-phosphocholine + a fatty acid + H(+). It carries out the reaction 1,2-dihexadecanoyl-sn-glycero-3-phosphocholine + H2O = 1-hexadecanoyl-sn-glycero-3-phosphocholine + hexadecanoate + H(+). Hydrolyzes the ester bond of the fatty acyl group attached at the sn-2 position of phospholipids such as phosphatidylcholine. Involved in gametogenesis; however, it is not clear whether it is involved in gametocytes development in host erythrocytes or in gametocyte activation in the mosquito midgut. Involved in gametocyte development in host erythrocytes; however, not involved in gametocytes activation including male gamete exflagellation. Involved in the rounding up of gametocytes following activation in the mosquito midgut; however, not required for gametocyte development in host erythrocytes. Required for exflagellation of activated male gametocytes. Involved in gametocytes egress from host erythrocytes by promoting the relocalization of perforin-like protein PLP2-containing vesicles to the periphery of gametocytes; PLP2 secretion is required for permeabilization of the erythrocyte membrane and thus, promotes gametocyte egress. Dispensable for asexual blood stage development. This is Patatin-like phospholipase 1 from Plasmodium falciparum (isolate NF54).